The primary structure comprises 77 residues: UPF0337 protein CE0198 (77 aa).

The tract at residues 1–77 is disordered; the sequence is MGDLSNKAEG…PDVEHPEAVN (77 aa). Composition is skewed to basic and acidic residues over residues 30–56 and 64–77; these read DEGR…KDGA and QDKD…EAVN.

Belongs to the UPF0337 (CsbD) family.

This is UPF0337 protein CE0198 from Corynebacterium efficiens (strain DSM 44549 / YS-314 / AJ 12310 / JCM 11189 / NBRC 100395).